Reading from the N-terminus, the 320-residue chain is Acetyl-coenzyme A carboxylase carboxyl transferase subunit alpha (320 aa).

A CoA carboxyltransferase C-terminal domain is found at 34–288 (RLEEALEAAR…GEALERVLAG (255 aa)).

Belongs to the AccA family. As to quaternary structure, acetyl-CoA carboxylase is a heterohexamer composed of biotin carboxyl carrier protein (AccB), biotin carboxylase (AccC) and two subunits each of ACCase subunit alpha (AccA) and ACCase subunit beta (AccD).

It localises to the cytoplasm. It carries out the reaction N(6)-carboxybiotinyl-L-lysyl-[protein] + acetyl-CoA = N(6)-biotinyl-L-lysyl-[protein] + malonyl-CoA. It participates in lipid metabolism; malonyl-CoA biosynthesis; malonyl-CoA from acetyl-CoA: step 1/1. Functionally, component of the acetyl coenzyme A carboxylase (ACC) complex. First, biotin carboxylase catalyzes the carboxylation of biotin on its carrier protein (BCCP) and then the CO(2) group is transferred by the carboxyltransferase to acetyl-CoA to form malonyl-CoA. In Rubrobacter xylanophilus (strain DSM 9941 / JCM 11954 / NBRC 16129 / PRD-1), this protein is Acetyl-coenzyme A carboxylase carboxyl transferase subunit alpha.